A 397-amino-acid chain; its full sequence is Tryptophan synthase beta chain (397 aa).

Residue Lys-91 is modified to N6-(pyridoxal phosphate)lysine.

The protein belongs to the TrpB family. Tetramer of two alpha and two beta chains. It depends on pyridoxal 5'-phosphate as a cofactor.

It carries out the reaction (1S,2R)-1-C-(indol-3-yl)glycerol 3-phosphate + L-serine = D-glyceraldehyde 3-phosphate + L-tryptophan + H2O. It participates in amino-acid biosynthesis; L-tryptophan biosynthesis; L-tryptophan from chorismate: step 5/5. Its function is as follows. The beta subunit is responsible for the synthesis of L-tryptophan from indole and L-serine. This is Tryptophan synthase beta chain from Bacillus thuringiensis (strain Al Hakam).